We begin with the raw amino-acid sequence, 626 residues long: Putative ankyrin repeat protein R837 (626 aa).

18 ANK repeats span residues 42–72, 80–109, 110–139, 140–169, 171–199, 201–230, 242–269, 270–298, 299–328, 330–358, 393–416, 417–446, 452–479, 480–509, 510–539, 540–569, 570–599, and 601–626; these read EYFN…GLIR, TLNT…NHRY, SEDK…NIKS, RNNY…DITV, DYEV…DIKK, NKKR…DVYR, KNYK…YQLS, DTNN…LHEL, NLNQ…DINT, GNSC…RLTS, TIMS…KSSL, DYES…ITKQ, INNS…GINI, CINY…NINE, FGDL…NIYI, IKDN…DYHK, KNEL…KTKT, and FFDP…NEIK.

This chain is Putative ankyrin repeat protein R837, found in Acanthamoeba polyphaga (Amoeba).